We begin with the raw amino-acid sequence, 122 residues long: MIQQETRLKVADNTGAKELLCIRVLGGSKRRYAYLGDTIVCTVKDAIPGGNVKKGEVVKAVVVRTVKSHRRPDGSYIKFDENAAVLLKGDGEPRGTRIFGPIARELREKKFMRIVSLAPEVI.

Belongs to the universal ribosomal protein uL14 family. In terms of assembly, part of the 50S ribosomal subunit. Forms a cluster with proteins L3 and L19. In the 70S ribosome, L14 and L19 interact and together make contacts with the 16S rRNA in bridges B5 and B8.

Its function is as follows. Binds to 23S rRNA. Forms part of two intersubunit bridges in the 70S ribosome. This Cutibacterium acnes (strain DSM 16379 / KPA171202) (Propionibacterium acnes) protein is Large ribosomal subunit protein uL14.